Here is an 86-residue protein sequence, read N- to C-terminus: Small ribosomal subunit protein bS20 (86 aa).

The protein belongs to the bacterial ribosomal protein bS20 family.

In terms of biological role, binds directly to 16S ribosomal RNA. The sequence is that of Small ribosomal subunit protein bS20 from Exiguobacterium sibiricum (strain DSM 17290 / CCUG 55495 / CIP 109462 / JCM 13490 / 255-15).